Reading from the N-terminus, the 132-residue chain is Small ribosomal subunit protein uS11 (132 aa).

The protein belongs to the universal ribosomal protein uS11 family. Part of the 30S ribosomal subunit. Interacts with proteins S7 and S18. Binds to IF-3.

Located on the platform of the 30S subunit, it bridges several disparate RNA helices of the 16S rRNA. Forms part of the Shine-Dalgarno cleft in the 70S ribosome. The chain is Small ribosomal subunit protein uS11 from Dichelobacter nodosus (strain VCS1703A).